A 315-amino-acid chain; its full sequence is Protein MFI (315 aa).

In terms of assembly, can homodimerize. Interacts with MFF; the interaction inhibits MFF interaction with DNM1L. In terms of tissue distribution, enriched in the pancreatic beta cell and the testis and is expressed at low levels in other tissues tested.

It localises to the cytoplasm. The protein resides in the cytosol. It is found in the mitochondrion outer membrane. In terms of biological role, acts as an inhibitor of mitochondrial fission. Interacts with MFF and prevents DNM1L recruitment to mitochondria, promoting a more fused mitochondrial network. This chain is Protein MFI, found in Mus musculus (Mouse).